Consider the following 632-residue polypeptide: Tetratricopeptide repeat protein 39B (632 aa).

TPR repeat units follow at residues 343–376, 535–568, and 576–609; these read SLVL…QEEW, CLVK…EKLL, and PFTL…YKDY.

It belongs to the TTC39 family.

Functionally, regulates high density lipoprotein (HDL) cholesterol metabolism by promoting the ubiquitination and degradation of the oxysterols receptors LXR (NR1H2 and NR1H3). The protein is Tetratricopeptide repeat protein 39B (TTC39B) of Macaca fascicularis (Crab-eating macaque).